A 370-amino-acid polypeptide reads, in one-letter code: uncharacterized protein (370 aa).

K207 is subject to N6-(pyridoxal phosphate)lysine.

This sequence belongs to the class-V pyridoxal-phosphate-dependent aminotransferase family. Pyridoxal 5'-phosphate serves as cofactor.

This is an uncharacterized protein from Bacillus subtilis (strain 168).